The sequence spans 505 residues: Gap junction alpha-10 protein (505 aa).

The Cytoplasmic portion of the chain corresponds to 1–16; it reads MGDWNLLGGILEEVHS. The helical transmembrane segment at 17–37 threads the bilayer; the sequence is HSTIVGKIWLTILFIFRMLVL. The Extracellular portion of the chain corresponds to 38-76; it reads GVAAEDVWDDEQSAFACNTQQPGCNNICYDDAFPISLIR. The chain crosses the membrane as a helical span at residues 77 to 97; sequence FWVLQIIFVSSPSLVYMGHAL. Over 98-165 the chain is Cytoplasmic; it reads YRLRDFEKQR…TYVLHILTRS (68 aa). Residues 166-186 traverse the membrane as a helical segment; sequence VLEVGFMIGQYILYGFQMHPI. Over 187–209 the chain is Extracellular; it reads YKCTQAPCPNSVDCFVSRPTEKT. The helical transmembrane segment at 210–230 threads the bilayer; the sequence is IFMLFMHSIAAISLLLNILEI. Over 231–505 the chain is Cytoplasmic; that stretch reads FHLGIRKIMR…IIHETYVYVY (275 aa). Residues 371–383 are compositionally biased toward polar residues; the sequence is TMTASQHRPSSAL. Positions 371–491 are disordered; that stretch reads TMTASQHRPS…SKSSHVDSPP (121 aa). Over residues 437-446 the composition is skewed to basic and acidic residues; it reads MSEKGQRHSD. The segment covering 447 to 460 has biased composition (low complexity); it reads SGSSRSLNSSCLDF.

This sequence belongs to the connexin family. Alpha-type (group II) subfamily. In terms of assembly, a connexon is composed of a hexamer of connexins. Low levels were detected in skin, heart, kidney, testis, ovary, intestine. Expression not detected in brain, sciatic nerve or liver. According to PubMed:15147297 expression is detected only in horizontal cells in the inner nuclear layer of the retina and not in other neurons of the central nervous system or tissues. Detected in the outer plexiform layer of the retina (at protein level).

It is found in the cell membrane. Its subcellular location is the cell junction. The protein localises to the gap junction. Its function is as follows. One gap junction consists of a cluster of closely packed pairs of transmembrane channels, the connexons, through which materials of low MW diffuse from one cell to a neighboring cell. Involved in tracer coupling between horizontal cells of the retina. May play a role in the regulation of horizontal cell patterning. This Mus musculus (Mouse) protein is Gap junction alpha-10 protein (Gja10).